Reading from the N-terminus, the 591-residue chain is V-type ATP synthase alpha chain (591 aa).

Position 233 to 240 (233 to 240 (GPFGAGKT)) interacts with ATP.

It belongs to the ATPase alpha/beta chains family.

It catalyses the reaction ATP + H2O + 4 H(+)(in) = ADP + phosphate + 5 H(+)(out). In terms of biological role, produces ATP from ADP in the presence of a proton gradient across the membrane. The V-type alpha chain is a catalytic subunit. In Streptococcus pneumoniae (strain ATCC 700669 / Spain 23F-1), this protein is V-type ATP synthase alpha chain.